The sequence spans 122 residues: Large ribosomal subunit protein uL14c (122 aa).

The protein belongs to the universal ribosomal protein uL14 family. In terms of assembly, part of the 50S ribosomal subunit.

The protein resides in the plastid. It is found in the chloroplast. In terms of biological role, binds to 23S rRNA. The sequence is that of Large ribosomal subunit protein uL14c from Porphyra purpurea (Red seaweed).